A 273-amino-acid polypeptide reads, in one-letter code: 4-hydroxy-tetrahydrodipicolinate reductase (273 aa).

NAD(+) is bound at residue 11–16 (GAGGRM). Arg-37 contributes to the NADP(+) binding site. NAD(+) is bound by residues 100–102 (GTT) and 124–127 (AANY). The active-site Proton donor/acceptor is His-157. His-158 provides a ligand contact to (S)-2,3,4,5-tetrahydrodipicolinate. The active-site Proton donor is the Lys-161. 167–168 (GT) is a (S)-2,3,4,5-tetrahydrodipicolinate binding site.

It belongs to the DapB family.

The protein resides in the cytoplasm. It catalyses the reaction (S)-2,3,4,5-tetrahydrodipicolinate + NAD(+) + H2O = (2S,4S)-4-hydroxy-2,3,4,5-tetrahydrodipicolinate + NADH + H(+). The enzyme catalyses (S)-2,3,4,5-tetrahydrodipicolinate + NADP(+) + H2O = (2S,4S)-4-hydroxy-2,3,4,5-tetrahydrodipicolinate + NADPH + H(+). It functions in the pathway amino-acid biosynthesis; L-lysine biosynthesis via DAP pathway; (S)-tetrahydrodipicolinate from L-aspartate: step 4/4. In terms of biological role, catalyzes the conversion of 4-hydroxy-tetrahydrodipicolinate (HTPA) to tetrahydrodipicolinate. This Acinetobacter baumannii (strain AB307-0294) protein is 4-hydroxy-tetrahydrodipicolinate reductase.